Consider the following 233-residue polypeptide: UPF0173 metal-dependent hydrolase Igni_1254 (233 aa).

It belongs to the UPF0173 family.

The sequence is that of UPF0173 metal-dependent hydrolase Igni_1254 from Ignicoccus hospitalis (strain KIN4/I / DSM 18386 / JCM 14125).